A 186-amino-acid chain; its full sequence is Ribosome maturation factor RimM (186 aa).

The 76-residue stretch at 93–168 folds into the PRC barrel domain; the sequence is EDDFYLVDLI…VLIDPPQEEN (76 aa). Residues 163–186 are disordered; it reads PPQEENAPEFGRNELGHDDGGEAA. Basic and acidic residues predominate over residues 173–186; sequence GRNELGHDDGGEAA.

Belongs to the RimM family. Binds ribosomal protein uS19.

It localises to the cytoplasm. Functionally, an accessory protein needed during the final step in the assembly of 30S ribosomal subunit, possibly for assembly of the head region. Essential for efficient processing of 16S rRNA. May be needed both before and after RbfA during the maturation of 16S rRNA. It has affinity for free ribosomal 30S subunits but not for 70S ribosomes. This is Ribosome maturation factor RimM from Granulibacter bethesdensis (strain ATCC BAA-1260 / CGDNIH1).